We begin with the raw amino-acid sequence, 256 residues long: MRLPAEALKDARKIVCFSGAGISAESGILTYLDQMPKLWAPYDPRALETANAFRESPALVWGWYLWRRRQVDRAQPNAAHLVWPQMVNLGYEVSVVTQNVDDLHERAGSTDVIHLHGSLTMPKCFACHRPAELTSDQMEIPDEGALVEPPRCKRCRGKLRPGVVWYGEDLPPGTWKNAVSLVKNCDALISVGTSGVVTPAADLPHIALASGATVIHVNTVDVGAQAANELMLVGRATDVLAKIHESLSTGKNNDNG.

One can recognise a Deacetylase sirtuin-type domain in the interval 1-250; that stretch reads MRLPAEALKD…AKIHESLSTG (250 aa). Position 19–39 (19–39) interacts with NAD(+); it reads GAGISAESGILTYLDQMPKLW. Y64 and R67 together coordinate substrate. An NAD(+)-binding site is contributed by 98-101; it reads QNVD. H116 (proton acceptor) is an active-site residue. Zn(2+) is bound by residues C124, C127, C152, and C155. Residues 192-194, 218-220, and A236 each bind NAD(+); these read GTS and NTV.

This sequence belongs to the sirtuin family. Class III subfamily. The cofactor is Zn(2+).

The protein localises to the cytoplasm. It carries out the reaction N(6)-acetyl-L-lysyl-[protein] + NAD(+) + H2O = 2''-O-acetyl-ADP-D-ribose + nicotinamide + L-lysyl-[protein]. The enzyme catalyses N(6)-succinyl-L-lysyl-[protein] + NAD(+) + H2O = 2''-O-succinyl-ADP-D-ribose + nicotinamide + L-lysyl-[protein]. In terms of biological role, NAD-dependent lysine deacetylase and desuccinylase that specifically removes acetyl and succinyl groups on target proteins. Modulates the activities of several proteins which are inactive in their acylated form. In Pseudomonas syringae pv. tomato (strain ATCC BAA-871 / DC3000), this protein is NAD-dependent protein deacylase 4.